A 454-amino-acid chain; its full sequence is UDP-N-acetylmuramoylalanine--D-glutamate ligase (454 aa).

G115–T121 lines the ATP pocket.

This sequence belongs to the MurCDEF family.

The protein resides in the cytoplasm. It carries out the reaction UDP-N-acetyl-alpha-D-muramoyl-L-alanine + D-glutamate + ATP = UDP-N-acetyl-alpha-D-muramoyl-L-alanyl-D-glutamate + ADP + phosphate + H(+). Its pathway is cell wall biogenesis; peptidoglycan biosynthesis. Functionally, cell wall formation. Catalyzes the addition of glutamate to the nucleotide precursor UDP-N-acetylmuramoyl-L-alanine (UMA). The protein is UDP-N-acetylmuramoylalanine--D-glutamate ligase of Thermoanaerobacter sp. (strain X514).